A 750-amino-acid polypeptide reads, in one-letter code: Probable methylmalonyl-CoA mutase large subunit (750 aa).

Positions 91, 94, 101, 103, 105, and 130 each coordinate (R)-methylmalonyl-CoA. Positions 133 and 155 each coordinate cob(II)alamin. Positions 211 and 213 each coordinate (R)-methylmalonyl-CoA. Cob(II)alamin-binding residues include V222 and R223. Residues R223, H260, R299, and S301 each contribute to the (R)-methylmalonyl-CoA site. The cob(II)alamin site is built by G349, E386, A389, G628, H629, D630, R631, S674, L676, G705, and T728. One can recognise a B12-binding domain in the interval 616–748 (RPRILIAKMG…HRLAERLGYT (133 aa)).

It belongs to the methylmalonyl-CoA mutase family. In terms of assembly, heterodimer of an alpha and a beta chain. The cofactor is adenosylcob(III)alamin.

The enzyme catalyses (R)-methylmalonyl-CoA = succinyl-CoA. It participates in metabolic intermediate metabolism; propanoyl-CoA degradation; succinyl-CoA from propanoyl-CoA: step 3/3. In terms of biological role, catalyzes the isomerization of succinyl-CoA to methylmalonyl-CoA during synthesis of propionate from tricarboxylic acid-cycle intermediates. This chain is Probable methylmalonyl-CoA mutase large subunit (mutB), found in Mycobacterium bovis (strain ATCC BAA-935 / AF2122/97).